Consider the following 145-residue polypeptide: Class I hydrophobin rodE (145 aa).

4 disulfides stabilise this stretch: cysteine 43–cysteine 126, cysteine 59–cysteine 120, cysteine 60–cysteine 95, and cysteine 127–cysteine 140.

Belongs to the fungal hydrophobin family. Self-assembles to form functional amyloid fibrils called rodlets. Self-assembly into fibrillar rodlets occurs spontaneously at hydrophobic:hydrophilic interfaces and the rodlets further associate laterally to form amphipathic monolayers.

Aerial growth, conidiation, and dispersal of filamentous fungi in the environment rely upon a capability of their secreting small amphipathic proteins called hydrophobins (HPBs) with low sequence identity. Class I can self-assemble into an outermost layer of rodlet bundles on aerial cell surfaces, conferring cellular hydrophobicity that supports fungal growth, development and dispersal; whereas Class II form highly ordered films at water-air interfaces through intermolecular interactions but contribute nothing to the rodlet structure. RodE is a class I hydrophobin that, unlike rodA, is not required for rodlet formation. The polypeptide is Class I hydrophobin rodE (Aspergillus fumigatus (strain ATCC MYA-4609 / CBS 101355 / FGSC A1100 / Af293) (Neosartorya fumigata)).